Here is a 375-residue protein sequence, read N- to C-terminus: F-box/kelch-repeat protein At4g39580 (375 aa).

The F-box domain maps to 20-66; sequence PTTNLFLPDDILLSSLSRISRLYYPTFSLVSKSFRSLIASPELYQTR. 3 Kelch repeats span residues 132–178, 179–225, and 229–269; these read NIYA…VLDG, KIYV…KSVG, and KYHL…VINN.

In Arabidopsis thaliana (Mouse-ear cress), this protein is F-box/kelch-repeat protein At4g39580.